Here is a 272-residue protein sequence, read N- to C-terminus: Shikimate dehydrogenase (NADP(+)) (272 aa).

Shikimate-binding positions include 14 to 16 and Thr-61; that span reads SKS. Lys-65 (proton acceptor) is an active-site residue. Residue Glu-77 participates in NADP(+) binding. Shikimate is bound by residues Asn-86 and Asp-102. NADP(+) is bound by residues 126 to 130, 149 to 154, and Met-213; these read GAGGA and NRTVSR. Tyr-215 contacts shikimate. Position 237 (Gly-237) interacts with NADP(+).

This sequence belongs to the shikimate dehydrogenase family. As to quaternary structure, homodimer.

The enzyme catalyses shikimate + NADP(+) = 3-dehydroshikimate + NADPH + H(+). The protein operates within metabolic intermediate biosynthesis; chorismate biosynthesis; chorismate from D-erythrose 4-phosphate and phosphoenolpyruvate: step 4/7. Functionally, involved in the biosynthesis of the chorismate, which leads to the biosynthesis of aromatic amino acids. Catalyzes the reversible NADPH linked reduction of 3-dehydroshikimate (DHSA) to yield shikimate (SA). The chain is Shikimate dehydrogenase (NADP(+)) from Shigella boydii serotype 18 (strain CDC 3083-94 / BS512).